The following is a 102-amino-acid chain: Large ribosomal subunit protein bL21 (102 aa).

It belongs to the bacterial ribosomal protein bL21 family. In terms of assembly, part of the 50S ribosomal subunit. Contacts protein L20.

In terms of biological role, this protein binds to 23S rRNA in the presence of protein L20. This Geotalea uraniireducens (strain Rf4) (Geobacter uraniireducens) protein is Large ribosomal subunit protein bL21.